The chain runs to 111 residues: CRIB domain-containing protein RIC2 (111 aa).

Positions 71 to 84 (IGFPTDVKHLSHIG) constitute a CRIB domain.

Interacts with ARAC11/ROP1. As to expression, expressed in roots, leaves, stems, flowers, siliques and pollen.

Its subcellular location is the cell membrane. In terms of biological role, functions as a downstream effector of Rho-related GTP binding proteins of the 'Rho of Plants' (ROPs) family. Participates in the propagation of ROP GTPase signals in specific cellular responses. Is involved in pollen tube growth regulation through its interaction with ARAC11/ROP1. This Arabidopsis thaliana (Mouse-ear cress) protein is CRIB domain-containing protein RIC2 (RIC2).